We begin with the raw amino-acid sequence, 326 residues long: Protein GVP36 (326 aa).

Position 2 is an N-acetylserine (serine 2). Serine 2 bears the Phosphoserine mark. Glycyl lysine isopeptide (Lys-Gly) (interchain with G-Cter in ubiquitin) cross-links involve residues lysine 13, lysine 305, and lysine 313. The tract at residues 299–326 (AEEPEAKPEVAEEEKPQTAISMNDEDDA) is disordered. Over residues 302 to 314 (PEAKPEVAEEEKP) the composition is skewed to basic and acidic residues. Residue serine 319 is modified to Phosphoserine.

Its subcellular location is the golgi apparatus membrane. This is Protein GVP36 (GVP36) from Saccharomyces cerevisiae (strain ATCC 204508 / S288c) (Baker's yeast).